A 370-amino-acid polypeptide reads, in one-letter code: Mesoderm posterior protein 2 (370 aa).

Disordered stretches follow at residues 51–89, 231–265, and 325–350; these read PSQP…EREK, SLER…HWTQ, and TSED…GLQL. Positions 57-77 are enriched in low complexity; the sequence is PARSTRTTQATAPRRTRPAPA. The bHLH domain occupies 79 to 133; sequence GQRQSASEREKLRMRTLARALQELRRFLPPSVAPAGQSLTKIETLRLAIRYIGHL. Over residues 325–334 the composition is skewed to polar residues; the sequence is TSEDQGSSPA. The interval 326-330 is may contain a degradation domain; it reads SEDQG.

Post-translationally, degraded by the proteasome. In terms of processing, phosphorylated.

The protein resides in the nucleus. Functionally, transcription factor with important role in somitogenesis. Defines the rostrocaudal patterning of the somite by participating in distinct Notch pathways. Also regulates the FGF signaling pathway. Specifies the rostral half of the somites. Generates rostro-caudal polarity of somites by down-regulating in the presumptive rostral domain DLL1, a Notch ligand. Participates in the segment border formation by activating in the anterior presomitic mesoderm LFNG, a negative regulator of DLL1-Notch signaling. Acts as a strong suppressor of Notch activity. Together with MESP1 is involved in the epithelialization of somitic mesoderm and in the development of cardiac mesoderm. May play a role with Tcf15 in the differentiation of myotomal and sclerotomal cells by regulating Pax family genes. Also controls the expression of the protocadherin PCDH8/PAPC, EPHA4, RIPPLY2, NOTCH2, FGFR1, and CER1. Binds to the E-boxes within the EPH4A and RIPPLY2 enhancers. The protein is Mesoderm posterior protein 2 (Mesp2) of Mus musculus (Mouse).